The sequence spans 494 residues: Guanosine-5'-triphosphate,3'-diphosphate pyrophosphatase (494 aa).

It belongs to the GppA/Ppx family. GppA subfamily.

It catalyses the reaction guanosine 3'-diphosphate 5'-triphosphate + H2O = guanosine 3',5'-bis(diphosphate) + phosphate + H(+). It functions in the pathway purine metabolism; ppGpp biosynthesis; ppGpp from GTP: step 2/2. Functionally, catalyzes the conversion of pppGpp to ppGpp. Guanosine pentaphosphate (pppGpp) is a cytoplasmic signaling molecule which together with ppGpp controls the 'stringent response', an adaptive process that allows bacteria to respond to amino acid starvation, resulting in the coordinated regulation of numerous cellular activities. This Escherichia fergusonii (strain ATCC 35469 / DSM 13698 / CCUG 18766 / IAM 14443 / JCM 21226 / LMG 7866 / NBRC 102419 / NCTC 12128 / CDC 0568-73) protein is Guanosine-5'-triphosphate,3'-diphosphate pyrophosphatase.